We begin with the raw amino-acid sequence, 98 residues long: NADH-ubiquinone oxidoreductase chain 4L (98 aa).

3 helical membrane-spanning segments follow: residues 1 to 21 (MSIV…GTLL), 29 to 49 (SLMC…LISL), and 59 to 79 (VPLI…ALLV).

It belongs to the complex I subunit 4L family. Core subunit of respiratory chain NADH dehydrogenase (Complex I) which is composed of 45 different subunits.

It is found in the mitochondrion inner membrane. It carries out the reaction a ubiquinone + NADH + 5 H(+)(in) = a ubiquinol + NAD(+) + 4 H(+)(out). Its function is as follows. Core subunit of the mitochondrial membrane respiratory chain NADH dehydrogenase (Complex I) which catalyzes electron transfer from NADH through the respiratory chain, using ubiquinone as an electron acceptor. Part of the enzyme membrane arm which is embedded in the lipid bilayer and involved in proton translocation. The protein is NADH-ubiquinone oxidoreductase chain 4L (MT-ND4L) of Hemiechinus auritus (Long-eared hedgehog).